A 386-amino-acid polypeptide reads, in one-letter code: MKLSNEDLCKLNKFWLYCEENQYFNVGYPESAAFDYSILEKFMKFSINNCGDWREESNYKLNSFEFEKEVMRFFSQLFKIPYNDSWGYISNGGTEGNMFSCYLAREIFPTAYIYYSEETHYSVDKIVRLLNIPARKIRSLPSGEIDYQNLVDQIQKDKQKNPIIFANIGTTMRGATDNIQRIQQDLASIGLERNDYYIHADAALSGMIMPFVEQPHPYSFEDGIDSISVSGHKMIGSPIPCGIVLAKRHMVDQISVEVDYISSRDQTISGSRNGHSALFMWTAIKSHSFVDWQGKVNQCLNMAEYTVQRFQEVGINAWRNKNSNTVVFPCPSEPVWRKHSLANSGSVAHIITMPHLDGPDKLDPLIEDVIYDLLPNYNILNVSGQN.

His120 is a substrate binding site. Lys233 is subject to N6-(pyridoxal phosphate)lysine.

It belongs to the group II decarboxylase family. Homotetramer. Pyridoxal 5'-phosphate serves as cofactor.

The catalysed reaction is L-histidine + H(+) = histamine + CO2. Its pathway is siderophore biosynthesis; anguibactin biosynthesis. The polypeptide is Histidine decarboxylase (Vibrio anguillarum (strain ATCC 68554 / 775) (Listonella anguillarum)).